The sequence spans 474 residues: Transmembrane transporter FVEG_12640 (474 aa).

Over residues 1–15 the composition is skewed to polar residues; the sequence is MASPTISSMEQYTPS. Residues 1 to 39 are disordered; the sequence is MASPTISSMEQYTPSSKDEKIVPLHGDAAGSDTEKGESR. 10 consecutive transmembrane segments (helical) span residues 72–92, 133–153, 164–184, 192–212, 231–251, 275–295, 317–337, 364–384, 387–407, and 431–451; these read ILAI…LCIV, LVGV…IVTS, GTCT…FSSI, WLTW…VVAV, WAPI…NIFI, ACLV…LVIY, VAYG…QHVA, LGIN…VPIL, LLGL…PALL, and LIMI…AVLI.

The protein belongs to the amino acid/polyamine transporter 2 family.

It is found in the membrane. Functionally, transmembrane transporter; part of the Fusarium detoxification of benzoxazolinone cluster 2 (FDB2) involved in the degradation of benzoxazolinones produced by the host plant. Maize, wheat, and rye produce the 2 benzoxazinone phytoanticipins 2,4-dihy-droxy-7-methoxy-1,4-benzoxazin-3-one (DIMBOA) and 2,4-dihydroxy-1,4-benzoxazin-3-one (DIBOA) that, due to their inherent instability once released, spontaneously degrade to the more stable corresponding benzoxazolinones, 6-methoxy-2-benzoxazolinone (MBOA) and 2-benzoxazolinone (BOA), respectively. Might be involved in the transport of metabolites of benzoxazolinone degradation. The sequence is that of Transmembrane transporter FVEG_12640 from Gibberella moniliformis (strain M3125 / FGSC 7600) (Maize ear and stalk rot fungus).